Reading from the N-terminus, the 333-residue chain is 4-hydroxy-3-methylbut-2-enyl diphosphate reductase (333 aa).

Cys20 lines the [4Fe-4S] cluster pocket. His49 and His85 together coordinate (2E)-4-hydroxy-3-methylbut-2-enyl diphosphate. His49 and His85 together coordinate dimethylallyl diphosphate. His49 and His85 together coordinate isopentenyl diphosphate. Cys107 contributes to the [4Fe-4S] cluster binding site. Residue His135 coordinates (2E)-4-hydroxy-3-methylbut-2-enyl diphosphate. Residue His135 coordinates dimethylallyl diphosphate. His135 provides a ligand contact to isopentenyl diphosphate. Residue Glu137 is the Proton donor of the active site. Thr176 serves as a coordination point for (2E)-4-hydroxy-3-methylbut-2-enyl diphosphate. Cys206 serves as a coordination point for [4Fe-4S] cluster. Residues Ser234, Ser235, Asn236, and Ser279 each contribute to the (2E)-4-hydroxy-3-methylbut-2-enyl diphosphate site. 4 residues coordinate dimethylallyl diphosphate: Ser234, Ser235, Asn236, and Ser279. Positions 234, 235, 236, and 279 each coordinate isopentenyl diphosphate.

The protein belongs to the IspH family. [4Fe-4S] cluster is required as a cofactor.

The catalysed reaction is isopentenyl diphosphate + 2 oxidized [2Fe-2S]-[ferredoxin] + H2O = (2E)-4-hydroxy-3-methylbut-2-enyl diphosphate + 2 reduced [2Fe-2S]-[ferredoxin] + 2 H(+). The enzyme catalyses dimethylallyl diphosphate + 2 oxidized [2Fe-2S]-[ferredoxin] + H2O = (2E)-4-hydroxy-3-methylbut-2-enyl diphosphate + 2 reduced [2Fe-2S]-[ferredoxin] + 2 H(+). Its pathway is isoprenoid biosynthesis; dimethylallyl diphosphate biosynthesis; dimethylallyl diphosphate from (2E)-4-hydroxy-3-methylbutenyl diphosphate: step 1/1. The protein operates within isoprenoid biosynthesis; isopentenyl diphosphate biosynthesis via DXP pathway; isopentenyl diphosphate from 1-deoxy-D-xylulose 5-phosphate: step 6/6. Its function is as follows. Catalyzes the conversion of 1-hydroxy-2-methyl-2-(E)-butenyl 4-diphosphate (HMBPP) into a mixture of isopentenyl diphosphate (IPP) and dimethylallyl diphosphate (DMAPP). Acts in the terminal step of the DOXP/MEP pathway for isoprenoid precursor biosynthesis. The polypeptide is 4-hydroxy-3-methylbut-2-enyl diphosphate reductase (Rhizobium johnstonii (strain DSM 114642 / LMG 32736 / 3841) (Rhizobium leguminosarum bv. viciae)).